A 309-amino-acid chain; its full sequence is Foldase protein PrsA 2 (309 aa).

An N-terminal signal peptide occupies residues 1 to 22 (MKQMNKLITGVVTLATVVTLSA). Cys-23 carries the N-palmitoyl cysteine lipid modification. Cys-23 is lipidated: S-diacylglycerol cysteine. The 96-residue stretch at 146-241 (TPTMTAEIMQ…RTYHIIKVTK (96 aa)) folds into the PpiC domain.

Belongs to the PrsA family.

Its subcellular location is the cell membrane. The enzyme catalyses [protein]-peptidylproline (omega=180) = [protein]-peptidylproline (omega=0). Its function is as follows. Plays a major role in protein secretion by helping the post-translocational extracellular folding of several secreted proteins. The sequence is that of Foldase protein PrsA 2 (prsA2) from Streptococcus pyogenes serotype M3 (strain ATCC BAA-595 / MGAS315).